Here is a 294-residue protein sequence, read N- to C-terminus: Cytidine deaminase (294 aa).

CMP/dCMP-type deaminase domains are found at residues 48 to 168 and 187 to 294; these read DDDA…FGPK and ALTD…RITF. 89–91 contacts substrate; that stretch reads NME. His102 contributes to the Zn(2+) binding site. Glu104 serves as the catalytic Proton donor. Zn(2+)-binding residues include Cys129 and Cys132.

Belongs to the cytidine and deoxycytidylate deaminase family. In terms of assembly, homodimer. Zn(2+) is required as a cofactor.

The catalysed reaction is cytidine + H2O + H(+) = uridine + NH4(+). The enzyme catalyses 2'-deoxycytidine + H2O + H(+) = 2'-deoxyuridine + NH4(+). In terms of biological role, this enzyme scavenges exogenous and endogenous cytidine and 2'-deoxycytidine for UMP synthesis. The polypeptide is Cytidine deaminase (Serratia proteamaculans (strain 568)).